We begin with the raw amino-acid sequence, 316 residues long: Methionyl-tRNA formyltransferase (316 aa).

A (6S)-5,6,7,8-tetrahydrofolate-binding site is contributed by 112-115 (GLLP).

It belongs to the Fmt family.

It carries out the reaction L-methionyl-tRNA(fMet) + (6R)-10-formyltetrahydrofolate = N-formyl-L-methionyl-tRNA(fMet) + (6S)-5,6,7,8-tetrahydrofolate + H(+). Functionally, attaches a formyl group to the free amino group of methionyl-tRNA(fMet). The formyl group appears to play a dual role in the initiator identity of N-formylmethionyl-tRNA by promoting its recognition by IF2 and preventing the misappropriation of this tRNA by the elongation apparatus. This is Methionyl-tRNA formyltransferase from Chlamydia muridarum (strain MoPn / Nigg).